The sequence spans 175 residues: Adenine phosphoribosyltransferase (175 aa).

Belongs to the purine/pyrimidine phosphoribosyltransferase family. Homodimer.

Its subcellular location is the cytoplasm. It catalyses the reaction AMP + diphosphate = 5-phospho-alpha-D-ribose 1-diphosphate + adenine. Its pathway is purine metabolism; AMP biosynthesis via salvage pathway; AMP from adenine: step 1/1. In terms of biological role, catalyzes a salvage reaction resulting in the formation of AMP, that is energically less costly than de novo synthesis. The polypeptide is Adenine phosphoribosyltransferase (Maricaulis maris (strain MCS10) (Caulobacter maris)).